We begin with the raw amino-acid sequence, 312 residues long: Acetyl-coenzyme A carboxylase carboxyl transferase subunit alpha (312 aa).

One can recognise a CoA carboxyltransferase C-terminal domain in the interval 32-286 (LLEERLARLR…KEALLKALEE (255 aa)).

This sequence belongs to the AccA family. Acetyl-CoA carboxylase is a heterohexamer composed of biotin carboxyl carrier protein (AccB), biotin carboxylase (AccC) and two subunits each of ACCase subunit alpha (AccA) and ACCase subunit beta (AccD).

It localises to the cytoplasm. It catalyses the reaction N(6)-carboxybiotinyl-L-lysyl-[protein] + acetyl-CoA = N(6)-biotinyl-L-lysyl-[protein] + malonyl-CoA. It functions in the pathway lipid metabolism; malonyl-CoA biosynthesis; malonyl-CoA from acetyl-CoA: step 1/1. In terms of biological role, component of the acetyl coenzyme A carboxylase (ACC) complex. First, biotin carboxylase catalyzes the carboxylation of biotin on its carrier protein (BCCP) and then the CO(2) group is transferred by the carboxyltransferase to acetyl-CoA to form malonyl-CoA. In Thermus thermophilus (strain ATCC BAA-163 / DSM 7039 / HB27), this protein is Acetyl-coenzyme A carboxylase carboxyl transferase subunit alpha.